Reading from the N-terminus, the 61-residue chain is Probable tautomerase LMOf2365_2536 (61 aa).

Proline 2 functions as the Proton acceptor; via imino nitrogen in the catalytic mechanism.

Belongs to the 4-oxalocrotonate tautomerase family.

This chain is Probable tautomerase LMOf2365_2536, found in Listeria monocytogenes serotype 4b (strain F2365).